The chain runs to 413 residues: MASPAIGQRPYPLLLDPEPPRYLQSLGGTEPPPPARPRRCIPTALISASGASEGRGSRRNARGDPEPTPRDCRHARPVRPGLQQRLRRRPGSHRPRDVRSIFEQPQDPRVLAERGEGHRFAELALRGGPGWCDLCGREVLRQALRCANCKFTCHPECRSLIQLDCRQKEGPALDRQSPESTLTPTFNKNVCKAVEETQHPPTIQEIKQKIDSYNSREKHCLGMKLSEDGTYTGFIKVHLKLRRPVTVPAGIRPQSIYDAIKEVNPAATTDKRTSFYLPLDAIKQLHISSSTTVSEVIQGLLKKFMVVDNPQKFALFKRIHKDGQVLFQKLSIADCPLYLRLLAGPDTDVLSFVLKENETGDVEWDAFSIPELQNFLTILEKEEQDKIHQLQKKYNKFRQKLEEALRESQGKPG.

Positions 1-105 (MASPAIGQRP…RDVRSIFEQP (105 aa)) are disordered. The span at 61 to 74 (ARGDPEPTPRDCRH) shows a compositional bias: basic and acidic residues. A Phorbol-ester/DAG-type zinc finger spans residues 117–165 (GHRFAELALRGGPGWCDLCGREVLRQALRCANCKFTCHPECRSLIQLDC). A phosphoserine mark is found at serine 177 and serine 274. The Ras-associating domain occupies 265-359 (PAATTDKRTS…LSFVLKENET (95 aa)). A Phosphothreonine modification is found at threonine 347. Positions 361–408 (DVEWDAFSIPELQNFLTILEKEEQDKIHQLQKKYNKFRQKLEEALRES) constitute an SARAH domain.

As to quaternary structure, interacts directly with activated HRAS; a RASSF5-STK4/MST1 complex probably associates with activated HRAS. Interacts with KRAS. Probably interacts with Ras-like GTPases RRAS, MRAS, RAP1B, RAP2A and RALA. Interacts with RRAS2. Can self-associate. Interacts with RSSF1 isoform A. The RSSF1 isoform A-RSSF5 heterodimer probably mediates the association of RSSF1 with HRAS. Isoform 2 interacts with activated RAP1A and ITGAL/LFA-1. Binds STK4/MST1, inhibiting STK4/MST1 autoactivation.

It localises to the cytoplasm. The protein resides in the cytoskeleton. Its function is as follows. Potential tumor suppressor. Seems to be involved in lymphocyte adhesion by linking RAP1A activation upon T-cell receptor or chemokine stimulation to integrin activation. Stimulates lymphocyte polarization and the patch-like distribution of ITGAL/LFA-1, resulting in an enhanced adhesion to ICAM1. Together with RAP1A may participate in regulation of microtubule growth. The association with activated RAP1A is required for directional movement of endothelial cells during wound healing. May be involved in regulation of Ras apoptotic function. The RASSF5-STK4/MST1 complex may mediate HRAS and KRAS induced apoptosis. This Rattus norvegicus (Rat) protein is Ras association domain-containing protein 5 (Rassf5).